The chain runs to 589 residues: uncharacterized protein (589 aa).

14 consecutive transmembrane segments (helical) span residues 90 to 110 (YIVI…QTVI), 128 to 148 (SWIG…CGIM), 162 to 182 (IVLF…LWLV), 189 to 209 (GIGG…ITPL), 217 to 237 (GCMG…GGAI), 245 to 265 (WIFF…IFFL), 284 to 304 (FVGI…LNIG), 311 to 331 (AHAN…GFVV), 355 to 375 (VMVT…YIPV), 390 to 410 (VHTL…GMGI), 419 to 439 (PMIG…AIYY), 448 to 468 (GFLA…LIAV), 483 to 503 (AFML…AVIY), and 545 to 565 (IRMI…LSFF).

This sequence belongs to the major facilitator superfamily. TCR/Tet family.

It is found in the membrane. This is an uncharacterized protein from Schizosaccharomyces pombe (strain 972 / ATCC 24843) (Fission yeast).